Consider the following 708-residue polypeptide: tRNA 5-methylaminomethyl-2-thiouridine biosynthesis bifunctional protein MnmC (708 aa).

The tract at residues 1–278 is tRNA (mnm(5)s(2)U34)-methyltransferase; the sequence is MTAEPNKPCQ…ERQVLRQQDA (278 aa). The FAD-dependent cmnm(5)s(2)U34 oxidoreductase stretch occupies residues 301–708; sequence IGGGLASAHL…LRKLLKGKAL (408 aa).

This sequence in the N-terminal section; belongs to the methyltransferase superfamily. tRNA (mnm(5)s(2)U34)-methyltransferase family. In the C-terminal section; belongs to the DAO family. Requires FAD as cofactor.

The protein resides in the cytoplasm. The catalysed reaction is 5-aminomethyl-2-thiouridine(34) in tRNA + S-adenosyl-L-methionine = 5-methylaminomethyl-2-thiouridine(34) in tRNA + S-adenosyl-L-homocysteine + H(+). Its function is as follows. Catalyzes the last two steps in the biosynthesis of 5-methylaminomethyl-2-thiouridine (mnm(5)s(2)U) at the wobble position (U34) in tRNA. Catalyzes the FAD-dependent demodification of cmnm(5)s(2)U34 to nm(5)s(2)U34, followed by the transfer of a methyl group from S-adenosyl-L-methionine to nm(5)s(2)U34, to form mnm(5)s(2)U34. This chain is tRNA 5-methylaminomethyl-2-thiouridine biosynthesis bifunctional protein MnmC, found in Shewanella baltica (strain OS195).